The primary structure comprises 256 residues: Transmembrane protein 187 (256 aa).

7 helical membrane passes run 8 to 28 (ALFH…TGIF), 51 to 71 (FLAM…GVYW), 94 to 112 (VFAG…RIGM), 119 to 139 (VLDQ…CLCL), 146 to 168 (WLFL…HPHG), 193 to 213 (NISS…FVVL), and 233 to 253 (FWSK…LTSL).

The protein localises to the membrane. In Bos taurus (Bovine), this protein is Transmembrane protein 187 (TMEM187).